A 530-amino-acid chain; its full sequence is Lysine--tRNA ligase (530 aa).

Positions 28-36 (PSGHIHVGN) match the 'HIGH' region motif. The short motif at 278 to 282 (PMSSS) is the 'KMSKS' region element.

It belongs to the class-I aminoacyl-tRNA synthetase family.

It localises to the cytoplasm. The enzyme catalyses tRNA(Lys) + L-lysine + ATP = L-lysyl-tRNA(Lys) + AMP + diphosphate. In Methanocaldococcus jannaschii (strain ATCC 43067 / DSM 2661 / JAL-1 / JCM 10045 / NBRC 100440) (Methanococcus jannaschii), this protein is Lysine--tRNA ligase (lysS).